The primary structure comprises 168 residues: Peptide deformylase (168 aa).

The Fe cation site is built by Cys-92 and His-134. Residue Glu-135 is part of the active site. Residue His-138 coordinates Fe cation.

This sequence belongs to the polypeptide deformylase family. Fe(2+) is required as a cofactor.

The enzyme catalyses N-terminal N-formyl-L-methionyl-[peptide] + H2O = N-terminal L-methionyl-[peptide] + formate. Removes the formyl group from the N-terminal Met of newly synthesized proteins. Requires at least a dipeptide for an efficient rate of reaction. N-terminal L-methionine is a prerequisite for activity but the enzyme has broad specificity at other positions. This is Peptide deformylase from Stutzerimonas stutzeri (strain A1501) (Pseudomonas stutzeri).